The chain runs to 828 residues: Periplasmic nitrate reductase (828 aa).

A signal peptide (tat-type signal) is located at residues M1–A31. In terms of domain architecture, 4Fe-4S Mo/W bis-MGD-type spans I39–D95. [4Fe-4S] cluster is bound by residues C46, C49, C53, and C81. Mo-bis(molybdopterin guanine dinucleotide) is bound by residues K83, Q150, N175, C179, W212–M219, S243–H247, Q262–D264, M372, Q376, N482, S508–D509, K531, D558, and T718–T727. F794 contributes to the substrate binding site. 2 residues coordinate Mo-bis(molybdopterin guanine dinucleotide): N802 and K819.

This sequence belongs to the prokaryotic molybdopterin-containing oxidoreductase family. NasA/NapA/NarB subfamily. As to quaternary structure, component of the periplasmic nitrate reductase NapAB complex composed of NapA and NapB. [4Fe-4S] cluster serves as cofactor. Requires Mo-bis(molybdopterin guanine dinucleotide) as cofactor. Post-translationally, predicted to be exported by the Tat system. The position of the signal peptide cleavage has not been experimentally proven.

Its subcellular location is the periplasm. It catalyses the reaction 2 Fe(II)-[cytochrome] + nitrate + 2 H(+) = 2 Fe(III)-[cytochrome] + nitrite + H2O. Catalytic subunit of the periplasmic nitrate reductase complex NapAB. Receives electrons from NapB and catalyzes the reduction of nitrate to nitrite. In Salmonella arizonae (strain ATCC BAA-731 / CDC346-86 / RSK2980), this protein is Periplasmic nitrate reductase.